The chain runs to 372 residues: Ligninase LG6 (372 aa).

Positions 1–21 are cleaved as a signal peptide; it reads MALKQLAAAVALALSIQAAQG. Positions 22–28 are excised as a propeptide; it reads AAVKEKR. 2 disulfide bridges follow: cysteine 31/cysteine 43 and cysteine 62/cysteine 148. Histidine 75 serves as the catalytic Proton acceptor. Aspartate 76, glycine 94, aspartate 96, and serine 98 together coordinate Ca(2+). Histidine 204 contacts heme b. Ca(2+)-binding residues include serine 205, aspartate 222, threonine 224, valine 227, and aspartate 229. Cysteine 277 and cysteine 345 are oxidised to a cystine. The N-linked (GlcNAc...) asparagine glycan is linked to asparagine 285. Positions 352–361 are enriched in low complexity; sequence TLTTLPGPET. The tract at residues 352 to 372 is disordered; sequence TLTTLPGPETSVQRIQPPPGA.

The protein belongs to the peroxidase family. Ligninase subfamily. Heme b is required as a cofactor. Ca(2+) serves as cofactor.

It carries out the reaction 1-(3,4-dimethoxyphenyl)-2-(2-methoxyphenoxy)propane-1,3-diol + H2O2 = 3,4-dimethoxybenzaldehyde + guaiacol + glycolaldehyde + H2O. The catalysed reaction is 2 (3,4-dimethoxyphenyl)methanol + H2O2 = 2 (3,4-dimethoxyphenyl)methanol radical + 2 H2O. The protein operates within secondary metabolite metabolism; lignin degradation. In terms of biological role, depolymerization of lignin. Catalyzes the C(alpha)-C(beta) cleavage of the propyl side chains of lignin. This is Ligninase LG6 (GLG6) from Phanerodontia chrysosporium (White-rot fungus).